A 191-amino-acid chain; its full sequence is 3-isopropylmalate dehydratase small subunit (191 aa).

Belongs to the LeuD family. LeuD type 1 subfamily. In terms of assembly, heterodimer of LeuC and LeuD.

It catalyses the reaction (2R,3S)-3-isopropylmalate = (2S)-2-isopropylmalate. It participates in amino-acid biosynthesis; L-leucine biosynthesis; L-leucine from 3-methyl-2-oxobutanoate: step 2/4. In terms of biological role, catalyzes the isomerization between 2-isopropylmalate and 3-isopropylmalate, via the formation of 2-isopropylmaleate. This is 3-isopropylmalate dehydratase small subunit from Lactococcus lactis subsp. cremoris (strain MG1363).